Here is a 311-residue protein sequence, read N- to C-terminus: Fructose-1,6-bisphosphatase class 1 (311 aa).

Mg(2+) contacts are provided by glutamate 90, aspartate 110, leucine 112, and aspartate 113. Residues 113 to 116 (DGSS), tyrosine 221, and lysine 251 contribute to the substrate site. Position 257 (glutamate 257) interacts with Mg(2+).

The protein belongs to the FBPase class 1 family. As to quaternary structure, homotetramer. Mg(2+) serves as cofactor.

It localises to the cytoplasm. The enzyme catalyses beta-D-fructose 1,6-bisphosphate + H2O = beta-D-fructose 6-phosphate + phosphate. The protein operates within carbohydrate biosynthesis; gluconeogenesis. The sequence is that of Fructose-1,6-bisphosphatase class 1 from Methanospirillum hungatei JF-1 (strain ATCC 27890 / DSM 864 / NBRC 100397 / JF-1).